The following is a 362-amino-acid chain: Diphosphomevalonate decarboxylase (362 aa).

(R)-5-diphosphomevalonate contacts are provided by residues Tyr-17–Lys-20, Arg-72, Ser-150–Arg-155, and Thr-206.

Belongs to the diphosphomevalonate decarboxylase family. As to quaternary structure, homodimer.

The enzyme catalyses (R)-5-diphosphomevalonate + ATP = isopentenyl diphosphate + ADP + phosphate + CO2. It participates in isoprenoid biosynthesis; isopentenyl diphosphate biosynthesis via mevalonate pathway; isopentenyl diphosphate from (R)-mevalonate: step 3/3. Diphosphomevalonate decarboxylase; part of the second module of ergosterol biosynthesis pathway that includes the middle steps of the pathway. MVD1 converts diphosphomevalonate into isopentenyl diphosphate. The second module is carried out in the vacuole and involves the formation of farnesyl diphosphate, which is also an important intermediate in the biosynthesis of ubiquinone, dolichol, heme and prenylated proteins. Activity by the mevalonate kinase ERG12 first converts mevalonate into 5-phosphomevalonate. 5-phosphomevalonate is then further converted to 5-diphosphomevalonate by the phosphomevalonate kinase ERG8. The diphosphomevalonate decarboxylase MVD then produces isopentenyl diphosphate. The isopentenyl-diphosphate delta-isomerase IDI1 then catalyzes the 1,3-allylic rearrangement of the homoallylic substrate isopentenyl (IPP) to its highly electrophilic allylic isomer, dimethylallyl diphosphate (DMAPP). Finally the farnesyl diphosphate synthase ERG20 catalyzes the sequential condensation of isopentenyl pyrophosphate with dimethylallyl pyrophosphate, and then with the resultant geranylpyrophosphate to the ultimate product farnesyl pyrophosphate. This Candida albicans (strain SC5314 / ATCC MYA-2876) (Yeast) protein is Diphosphomevalonate decarboxylase.